A 331-amino-acid polypeptide reads, in one-letter code: Phenylalanine--tRNA ligase alpha subunit (331 aa).

Mg(2+) is bound at residue E252.

This sequence belongs to the class-II aminoacyl-tRNA synthetase family. Phe-tRNA synthetase alpha subunit type 1 subfamily. In terms of assembly, tetramer of two alpha and two beta subunits. Mg(2+) serves as cofactor.

Its subcellular location is the cytoplasm. It catalyses the reaction tRNA(Phe) + L-phenylalanine + ATP = L-phenylalanyl-tRNA(Phe) + AMP + diphosphate + H(+). The polypeptide is Phenylalanine--tRNA ligase alpha subunit (Xanthomonas oryzae pv. oryzae (strain MAFF 311018)).